Consider the following 279-residue polypeptide: Protease HtpX homolog (279 aa).

2 helical membrane passes run 4-24 and 34-54; these read IFLF…VLAV and GSLL…SLLM. Histidine 140 provides a ligand contact to Zn(2+). Glutamate 141 is an active-site residue. Residue histidine 144 participates in Zn(2+) binding. Helical transmembrane passes span 155 to 175 and 189 to 209; these read LIQG…ANLI and FLVS…IVMW. Glutamate 215 lines the Zn(2+) pocket.

It belongs to the peptidase M48B family. It depends on Zn(2+) as a cofactor.

Its subcellular location is the cell inner membrane. This chain is Protease HtpX homolog, found in Neisseria gonorrhoeae (strain ATCC 700825 / FA 1090).